Here is a 418-residue protein sequence, read N- to C-terminus: Serine hydroxymethyltransferase (418 aa).

(6S)-5,6,7,8-tetrahydrofolate contacts are provided by residues Leu-121 and Gly-125–Leu-127. At Lys-230 the chain carries N6-(pyridoxal phosphate)lysine. (6S)-5,6,7,8-tetrahydrofolate is bound at residue Ser-355–Phe-357.

It belongs to the SHMT family. Homodimer. Requires pyridoxal 5'-phosphate as cofactor.

It is found in the cytoplasm. The catalysed reaction is (6R)-5,10-methylene-5,6,7,8-tetrahydrofolate + glycine + H2O = (6S)-5,6,7,8-tetrahydrofolate + L-serine. It participates in one-carbon metabolism; tetrahydrofolate interconversion. It functions in the pathway amino-acid biosynthesis; glycine biosynthesis; glycine from L-serine: step 1/1. In terms of biological role, catalyzes the reversible interconversion of serine and glycine with tetrahydrofolate (THF) serving as the one-carbon carrier. This reaction serves as the major source of one-carbon groups required for the biosynthesis of purines, thymidylate, methionine, and other important biomolecules. Also exhibits THF-independent aldolase activity toward beta-hydroxyamino acids, producing glycine and aldehydes, via a retro-aldol mechanism. The sequence is that of Serine hydroxymethyltransferase from Streptococcus pyogenes serotype M49 (strain NZ131).